Consider the following 512-residue polypeptide: ADP,ATP carrier protein 4 (512 aa).

The next 12 helical transmembrane spans lie at 34 to 54, 71 to 91, 102 to 122, 157 to 177, 192 to 212, 231 to 251, 296 to 316, 330 to 350, 361 to 381, 390 to 410, 448 to 468, and 476 to 496; these read ISKF…QNLI, ISFL…VMYV, IFYL…YVIF, FSLF…LLFW, FYPL…HFLE, FHTL…IVSI, LIAT…GPWK, AAFI…FVLL, FTSA…FFAF, LIIA…IGAI, VIGT…IFII, and SISI…IWAT.

This sequence belongs to the ADP/ATP translocase tlc family.

Its subcellular location is the cell membrane. In terms of biological role, provides the rickettsial cell with host ATP in exchange for rickettsial ADP. This is an obligate exchange system. This energy acquiring activity is an important component of rickettsial parasitism. This chain is ADP,ATP carrier protein 4 (tlcD), found in Rickettsia typhi (strain ATCC VR-144 / Wilmington).